A 169-amino-acid chain; its full sequence is Peptide deformylase (169 aa).

Fe cation is bound by residues C91 and H133. Residue E134 is part of the active site. A Fe cation-binding site is contributed by H137.

The protein belongs to the polypeptide deformylase family. Requires Fe(2+) as cofactor.

It carries out the reaction N-terminal N-formyl-L-methionyl-[peptide] + H2O = N-terminal L-methionyl-[peptide] + formate. In terms of biological role, removes the formyl group from the N-terminal Met of newly synthesized proteins. Requires at least a dipeptide for an efficient rate of reaction. N-terminal L-methionine is a prerequisite for activity but the enzyme has broad specificity at other positions. The sequence is that of Peptide deformylase from Citrobacter koseri (strain ATCC BAA-895 / CDC 4225-83 / SGSC4696).